A 356-amino-acid polypeptide reads, in one-letter code: PEP-dependent dihydroxyacetone kinase, dihydroxyacetone-binding subunit DhaK (356 aa).

In terms of domain architecture, DhaK spans Asp7–Leu352. Dihydroxyacetone-binding positions include Gly53 to His56, Lys104, and Asp109. The active-site Proton acceptor is His56. His218 functions as the Tele-hemiaminal-histidine intermediate in the catalytic mechanism.

Homodimer. The dihydroxyacetone kinase complex is composed of a homodimer of DhaM, a homodimer of DhaK and the subunit DhaL. DhaL also forms a complex with DhaR.

It catalyses the reaction dihydroxyacetone + phosphoenolpyruvate = dihydroxyacetone phosphate + pyruvate. The protein operates within polyol metabolism; glycerol degradation. With respect to regulation, inhibited by chloro-3-hydroxyacetone and D,L-glyceraldehyde. Dihydroxyacetone binding subunit of the dihydroxyacetone kinase, which is responsible for the phosphoenolpyruvate (PEP)-dependent phosphorylation of dihydroxyacetone via a phosphoryl group transfer from DhaL-ATP. Binds covalently dihydroxyacetone in hemiaminal linkage. DhaK also acts as corepressor of the transcription activator DhaR by binding to the sensor domain of DhaR. In the presence of dihydroxyacetone, DhaL-ADP displaces DhaK and stimulates DhaR activity. In the absence of dihydroxyacetone, DhaL-ADP is converted by the PTS to DhaL-ATP, which does not bind to DhaR. In Escherichia coli (strain K12), this protein is PEP-dependent dihydroxyacetone kinase, dihydroxyacetone-binding subunit DhaK.